The primary structure comprises 507 residues: Chromosomal replication initiator protein DnaA (507 aa).

The tract at residues 1 to 112 (MTDDPGSGFT…PATDEADDTT (112 aa)) is domain I, interacts with DnaA modulators. Residues 99–162 (RIAPPATDEA…ERPRNTDSAT (64 aa)) form a disordered region. Positions 113–127 (VPPSENPATTSPDTT) are enriched in polar residues. The tract at residues 113–166 (VPPSENPATTSPDTTTDNDEIDDSAAARGDNQHSWPSYFTERPRNTDSATAGVT) is domain II. A domain III, AAA+ region region spans residues 167–383 (SLNRRYTFDT…GALIRVTAFA (217 aa)). 4 residues coordinate ATP: G211, G213, K214, and T215. The tract at residues 384–507 (SLNKTPIDKA…TTRIRQRSKR (124 aa)) is domain IV, binds dsDNA.

The protein belongs to the DnaA family. In terms of assembly, oligomerizes as a right-handed, spiral filament on DNA at oriC.

It localises to the cytoplasm. Plays an essential role in the initiation and regulation of chromosomal replication. ATP-DnaA binds to the origin of replication (oriC) to initiate formation of the DNA replication initiation complex once per cell cycle. Binds the DnaA box (a 9 base pair repeat at the origin) and separates the double-stranded (ds)DNA. Forms a right-handed helical filament on oriC DNA; dsDNA binds to the exterior of the filament while single-stranded (ss)DNA is stabiized in the filament's interior. The ATP-DnaA-oriC complex binds and stabilizes one strand of the AT-rich DNA unwinding element (DUE), permitting loading of DNA polymerase. After initiation quickly degrades to an ADP-DnaA complex that is not apt for DNA replication. Binds acidic phospholipids. In Mycobacterium bovis (strain ATCC BAA-935 / AF2122/97), this protein is Chromosomal replication initiator protein DnaA.